Consider the following 200-residue polypeptide: Inner membrane-spanning protein YciB (200 aa).

6 helical membrane passes run 1 to 21, 37 to 57, 66 to 86, 103 to 123, 136 to 156, and 167 to 187; these read MPPLLKLALELGPLLVFFFAN, IGAPIFLATALFMAATVIALA, LPIMPLVSGIVVLVFGALTLW, LFGGILLGGLFFGKSLLGYVF, KLTLRWGLFFIFLAIVNEIVW, and FKVWGIMPITIVFTLLQMPLI.

Belongs to the YciB family.

The protein localises to the cell inner membrane. Plays a role in cell envelope biogenesis, maintenance of cell envelope integrity and membrane homeostasis. This Brucella suis biovar 1 (strain 1330) protein is Inner membrane-spanning protein YciB.